The primary structure comprises 513 residues: MTAAENPFVSDTSSLQSQLKEKEKELLAAKAEVEALRTNEELKDRVFKELRENVRKLEEKLGATENQVDQKELERKKLEEEKEDALAAQDAAEEALRRVYTHQQDDDSLPLESIIAPLESQIKIHKHEISALQEDKKALERLTKSKESALLEAERILRSALERALIVEEVQNHNFELRRQIEICQDENKFLEKINRQKVLEIEKLSQSIVELEEAILAGGTAANAVRDYRRQISQLNDEKRTLERELARVKVSASRVALAVANEWKDENDRVMPVKQWLEERRILHGEMQKLKDKLAVSERTAKAESQLKERLKLRLKTIEDGLKGPNTFFVSPTTKTEKSGKILGFLTSGGGSKKRSSSQLRGSVTGRIHAMNQPIDRVGESDEMENSKITANGLTDQHEEDSERKTEEDGNVYSEDMVSGFLYDRLQKEVIALRKLCESKEGTINAKNEEIKMLLKKVDALTKAIEVETKKAKREAAAREKENALAMLNEESKLCRKAKLPRSRIPNPRCQ.

4 disordered regions span residues 1–20 (MTAA…SQLK), 60–81 (KLGA…LEEE), 347–367 (FLTS…GSVT), and 393–413 (ANGL…EDGN). Polar residues predominate over residues 9–18 (VSDTSSLQSQ). Residues 10–322 (SDTSSLQSQL…LKLRLKTIED (313 aa)) are a coiled coil. The segment covering 60–80 (KLGATENQVDQKELERKKLEE) has biased composition (basic and acidic residues). Positions 190 to 400 (FLEKINRQKV…ITANGLTDQH (211 aa)) are required for targeting to microtubules. Positions 426 to 501 (DRLQKEVIAL…EESKLCRKAK (76 aa)) form a coiled coil.

This sequence belongs to the MAP70 family. Interacts with MAP70.1 and itself.

The protein resides in the cytoplasm. It localises to the cytoskeleton. In terms of biological role, plant-specific protein that interact with microtubules and regulates microtubule dynamics. May play a role in anisotropic cell expansion and organ growth. In association with MAP70.1, is essential for the normal banding pattern of secondary cell wall and for the proper development of xylem tracheary elements and wood formation. In Arabidopsis thaliana (Mouse-ear cress), this protein is Microtubule-associated protein 70-5 (MAP70.5).